Here is a 497-residue protein sequence, read N- to C-terminus: Latent membrane protein 2 (497 aa).

Residues 1 to 108 (MGSLEMVPMG…PPYSPRDDSS (108 aa)) are disordered. Residues 1–123 (MGSLEMVPMG…EAGRGSMNPV (123 aa)) are Cytoplasmic-facing. Polar residues predominate over residues 27–41 (NNSQYPSASGSSGNT). Residues 97-101 (PPPPY) carry the PPxY motif motif. Tyrosine 112 is subject to Phosphotyrosine; by host. A helical membrane pass occupies residues 124 to 144 (CLPVIVAPYLFWLAAIAASCF). The Extracellular segment spans residues 145–147 (TAS). The helical transmembrane segment at 148-168 (VSTVVTATGLALSLLLLAAVA) threads the bilayer. Topologically, residues 169 to 177 (SSYAAAQRK) are cytoplasmic. The chain crosses the membrane as a helical span at residues 178-198 (LLTPVTVLTAVVTFFAICLTW). Residues 199-211 (RIEDPPFNSLLFA) are Extracellular-facing. A helical transmembrane segment spans residues 212 to 232 (LLAAAGGLQGIYVLVMLVLLI). Residues 233-241 (LAYRRRWRR) lie on the Cytoplasmic side of the membrane. The helical transmembrane segment at 242–262 (LTVCGGIMFLACVLVLIVDAV) threads the bilayer. At 263 to 267 (LQLSP) the chain is on the extracellular side. A helical transmembrane segment spans residues 268 to 288 (LLGAVTVVSMTLLLLAFVLWL). The Cytoplasmic segment spans residues 289–296 (SSPGGLGT). The chain crosses the membrane as a helical span at residues 297-317 (LGAALLTLAAALALLASLILG). Position 318 (threonine 318) is a topological domain, extracellular. A helical transmembrane segment spans residues 319-339 (LNLTTMFLLMLLWTLVVLLIC). The Cytoplasmic portion of the chain corresponds to 340–354 (SSCSSCPLSKILLAR). A helical membrane pass occupies residues 355–375 (LFLYALALLLLASALIAGGSI). At 376–388 (LQTNFKSLSSTEF) the chain is on the extracellular side. Residues 389 to 409 (IPNLFCMLLLIVAGILFILAI) form a helical membrane-spanning segment. The Cytoplasmic portion of the chain corresponds to 410–422 (LTEWGSGNRTYGP). A helical membrane pass occupies residues 423 to 443 (VFMCLGGLLTMVAGAVWLTVM). At 444-449 (SNTLLS) the chain is on the extracellular side. The helical transmembrane segment at 450–470 (AWILTAGFLIFLIGFALFGVI) threads the bilayer. The Cytoplasmic segment spans residues 471–497 (RCCRYCCYYCLTLESEERPPTPYRNTV).

It belongs to the herpesviridae LMP-2 family. In terms of assembly, the cytoplasmic N-terminal domain interacts with human SRC family protein tyrosine kinases SYK and LYN. Binds human ITCH, WWP2 and NEDD4L. Post-translationally, phosphorylated on cytoplasmic N-terminal tyrosine residues, possibly by human LYN. Can be ubiquitinated by human ITCH and WWP2 on the N-terminus in a lysine-independent manner.

The protein localises to the host cell membrane. It is found in the host endomembrane system. Its subcellular location is the host cytoplasm. It localises to the host perinuclear region. Maintains EBV latent infection of B-lymphocyte, by preventing lytic reactivation of the virus in response to surface immunoglobulin (sIg) cross-linking. Acts like a dominant negative inhibitor of the sIg-associated protein tyrosine kinases, LYN and SYK. Also blocks translocation of the B-cell antigen receptor (BCR) into lipid rafts, preventing the subsequent signaling and accelerated internalization of the BCR upon BCR cross-linking. Serves as a molecular scaffold to recruit SYK, LYN and E3 protein-ubiquitin ligases, such as ITCH and NEDD4L, leading to ubiquitination and potential degradation of both tyrosines kinases. Possesses a constitutive signaling activity in non-transformed cells, inducing bypass of normal B lymphocyte developmental checkpoints allowing immunoglobulin-negative cells to colonize peripheral lymphoid organs. Functionally, may be a negative regulator of isoform LMP2A. This Epstein-Barr virus (strain B95-8) (HHV-4) protein is Latent membrane protein 2 (LMP2).